A 156-amino-acid polypeptide reads, in one-letter code: ATP synthase subunit b (156 aa).

The chain crosses the membrane as a helical span at residues 7-27 (LIGELIAFTVFVLFCMKFVWP).

It belongs to the ATPase B chain family. As to quaternary structure, F-type ATPases have 2 components, F(1) - the catalytic core - and F(0) - the membrane proton channel. F(1) has five subunits: alpha(3), beta(3), gamma(1), delta(1), epsilon(1). F(0) has three main subunits: a(1), b(2) and c(10-14). The alpha and beta chains form an alternating ring which encloses part of the gamma chain. F(1) is attached to F(0) by a central stalk formed by the gamma and epsilon chains, while a peripheral stalk is formed by the delta and b chains.

Its subcellular location is the cell inner membrane. Functionally, f(1)F(0) ATP synthase produces ATP from ADP in the presence of a proton or sodium gradient. F-type ATPases consist of two structural domains, F(1) containing the extramembraneous catalytic core and F(0) containing the membrane proton channel, linked together by a central stalk and a peripheral stalk. During catalysis, ATP synthesis in the catalytic domain of F(1) is coupled via a rotary mechanism of the central stalk subunits to proton translocation. Component of the F(0) channel, it forms part of the peripheral stalk, linking F(1) to F(0). This is ATP synthase subunit b from Pseudoalteromonas translucida (strain TAC 125).